The chain runs to 904 residues: Nitrate reductase [NADH] 2 (904 aa).

Polar residues-rich tracts occupy residues 1-10 (MAASVENRQF) and 35-50 (PSPN…NSTI). Residues 1–65 (MAASVENRQF…SSEDDDDDDE (65 aa)) form a disordered region. Residues 56 to 65 (SSEDDDDDDE) are compositionally biased toward acidic residues. Cys-183 serves as a coordination point for Mo-molybdopterin. The region spanning 531 to 606 (SKMYSMSEVR…LEDFRIGELI (76 aa)) is the Cytochrome b5 heme-binding domain. Residues His-566 and His-589 each coordinate heme. In terms of domain architecture, FAD-binding FR-type spans 647–759 (REKIPCKLID…KGPLGHIEYQ (113 aa)). FAD is bound by residues 699–702 (RAYT), 716–720 (VVKIY), Phe-721, Phe-728, 733–735 (QMS), and Thr-786.

Belongs to the nitrate reductase family. As to quaternary structure, homodimer. The cofactor is FAD. Requires heme as cofactor. Mo-molybdopterin is required as a cofactor.

The catalysed reaction is nitrite + NAD(+) + H2O = nitrate + NADH + H(+). With respect to regulation, regulated by the nitrogen source and controlled by the circadian rhythm. Its function is as follows. Nitrate reductase is a key enzyme involved in the first step of nitrate assimilation in plants, fungi and bacteria. This is Nitrate reductase [NADH] 2 (NIA2) from Nicotiana tabacum (Common tobacco).